Here is a 130-residue protein sequence, read N- to C-terminus: Small ribosomal subunit protein uS9 (130 aa).

It belongs to the universal ribosomal protein uS9 family.

The polypeptide is Small ribosomal subunit protein uS9 (Paraburkholderia phymatum (strain DSM 17167 / CIP 108236 / LMG 21445 / STM815) (Burkholderia phymatum)).